Here is a 262-residue protein sequence, read N- to C-terminus: Protein CUSTOS (262 aa).

Disordered regions lie at residues 1 to 79 (MAAP…LQTT) and 126 to 262 (FTSV…IPAN). Over residues 9–18 (SDSESSNSSS) the composition is skewed to low complexity. Positions 51–61 (ANSQLSTSQPS) are enriched in polar residues. The residue at position 61 (S61) is a Phosphoserine. T79 is modified (phosphothreonine). A Phosphoserine modification is found at S138. T182 carries the phosphothreonine modification. Over residues 188–199 (KKKRKLKKKAKK) the composition is skewed to basic residues. The segment covering 200–209 (VASVDSAVAA) has biased composition (low complexity). A compositionally biased stretch (polar residues) spans 210 to 221 (TTPTSMATVQKQ). T211 is modified (phosphothreonine). Positions 236-241 (KKKKKA) match the Nucleolar localization signal (NLS) motif.

Belongs to the CUSTOS family.

It localises to the nucleus envelope. In terms of biological role, plays a role in the regulation of Wnt signaling pathway during early development. The polypeptide is Protein CUSTOS (Homo sapiens (Human)).